Consider the following 459-residue polypeptide: Cysteine--tRNA ligase (459 aa).

Cys29 contributes to the Zn(2+) binding site. The 'HIGH' region motif lies at 31-41; it reads MTVYDLCHLGH. Residues Cys213, His238, and Glu242 each contribute to the Zn(2+) site. The 'KMSKS' region signature appears at 270–274; that stretch reads KMSKS. Lys273 provides a ligand contact to ATP.

It belongs to the class-I aminoacyl-tRNA synthetase family. In terms of assembly, monomer. Zn(2+) serves as cofactor.

The protein localises to the cytoplasm. The catalysed reaction is tRNA(Cys) + L-cysteine + ATP = L-cysteinyl-tRNA(Cys) + AMP + diphosphate. In Variovorax paradoxus (strain S110), this protein is Cysteine--tRNA ligase.